We begin with the raw amino-acid sequence, 242 residues long: Pyridoxine 5'-phosphate synthase (242 aa).

Asparagine 6 lines the 3-amino-2-oxopropyl phosphate pocket. Position 8–9 (8–9) interacts with 1-deoxy-D-xylulose 5-phosphate; sequence DH. Arginine 17 contacts 3-amino-2-oxopropyl phosphate. Histidine 42 functions as the Proton acceptor in the catalytic mechanism. 1-deoxy-D-xylulose 5-phosphate is bound by residues arginine 44 and histidine 49. Catalysis depends on glutamate 69, which acts as the Proton acceptor. Threonine 99 contributes to the 1-deoxy-D-xylulose 5-phosphate binding site. The active-site Proton donor is the histidine 190. 3-amino-2-oxopropyl phosphate-binding positions include glycine 191 and 212 to 213; that span reads GH.

This sequence belongs to the PNP synthase family. As to quaternary structure, homooctamer; tetramer of dimers.

Its subcellular location is the cytoplasm. The catalysed reaction is 3-amino-2-oxopropyl phosphate + 1-deoxy-D-xylulose 5-phosphate = pyridoxine 5'-phosphate + phosphate + 2 H2O + H(+). The protein operates within cofactor biosynthesis; pyridoxine 5'-phosphate biosynthesis; pyridoxine 5'-phosphate from D-erythrose 4-phosphate: step 5/5. In terms of biological role, catalyzes the complicated ring closure reaction between the two acyclic compounds 1-deoxy-D-xylulose-5-phosphate (DXP) and 3-amino-2-oxopropyl phosphate (1-amino-acetone-3-phosphate or AAP) to form pyridoxine 5'-phosphate (PNP) and inorganic phosphate. The protein is Pyridoxine 5'-phosphate synthase of Neisseria meningitidis serogroup C.